Reading from the N-terminus, the 123-residue chain is MAEHNELGKLGEDLAAEHLEKENYKILERNWVYKNAEVDILAQKENILVVVEVKTRSSLDFGSPQDFVKPKKIQLLIKAVNAYINYREKDFEEDINVRFDIVAIHKNGESFAIEHLTDAFYHF.

Belongs to the UPF0102 family.

The polypeptide is UPF0102 protein Fjoh_1217 (Flavobacterium johnsoniae (strain ATCC 17061 / DSM 2064 / JCM 8514 / BCRC 14874 / CCUG 350202 / NBRC 14942 / NCIMB 11054 / UW101) (Cytophaga johnsonae)).